The chain runs to 57 residues: UPF0391 membrane protein BRADO5617 (57 aa).

The next 2 membrane-spanning stretches (helical) occupy residues 1–21 (MLGW…LGFG) and 30–50 (IAKI…VVGL).

It belongs to the UPF0391 family.

The protein localises to the cell membrane. In Bradyrhizobium sp. (strain ORS 278), this protein is UPF0391 membrane protein BRADO5617.